The following is an 878-amino-acid chain: Probable di- and tripeptidase DUG2 (878 aa).

WD repeat units lie at residues 18–57, 68–107, 235–274, 282–322, and 362–405; these read NHAF…LIHT, HTRS…IRDD, RFNQ…GQNT, DKID…IIST, and PQQG…SAVP. H520 is a Zn(2+) binding site. Residue D522 is part of the active site. D553 contributes to the Zn(2+) binding site. The active-site Proton acceptor is E586. Position 587 (E587) interacts with Zn(2+). The stretch at 608–651 is one WD 6 repeat; it reads IDWILLSNSTWVDQEHPCLNYGLRGVINAQIKVWSDKPDGHSGL. H853 contributes to the Zn(2+) binding site.

It belongs to the peptidase M20A family. Component of the GSH degradosomal complex composed of at least DUG1, DUG2 and DUG3. The cofactor is Zn(2+).

The protein resides in the cytoplasm. It is found in the nucleus. Component of the GSH degradosomal complex involved in the degradation of glutathione (GSH) and other peptides containing a gamma-glu-X bond. In Saccharomyces cerevisiae (strain ATCC 204508 / S288c) (Baker's yeast), this protein is Probable di- and tripeptidase DUG2 (DUG2).